Reading from the N-terminus, the 529-residue chain is Zinc finger protein 490 (529 aa).

A disordered region spans residues 1 to 53 (MRRNSSLSFQMERPLEEQVQSKWSSSQGRTGTGGSDVLQMQNSEHHGQSIKTQ). Residues 57–132 (ISLEDVAVNF…ALCENKEDCP (76 aa)) enclose the KRAB domain. 13 consecutive C2H2-type zinc fingers follow at residues 156 to 178 (CDCS…MRSH), 194 to 216 (HKCK…ERIH), 222 to 244 (YECK…IRIH), 250 to 272 (YECK…EKNH), 278 to 300 (YKCK…ERTH), 306 to 328 (YECK…EKTH), 334 to 356 (FVCR…VKTH), 362 to 384 (YTCK…ERTH), 390 to 412 (YECK…ERVH), 418 to 440 (YECK…ERTH), 446 to 468 (YECK…ERSH), 474 to 496 (CECK…KRIH), and 502 to 524 (FQCR…ERTH).

Belongs to the krueppel C2H2-type zinc-finger protein family.

Its subcellular location is the nucleus. Its function is as follows. May be involved in transcriptional regulation. In Homo sapiens (Human), this protein is Zinc finger protein 490 (ZNF490).